Reading from the N-terminus, the 249-residue chain is MHGWLLLVWVQGLIQAAFLATAIGATAGTIDTKRNISAEEGGSVILQCHFSSDTAEVTQVDWKQQDQLLAIYSVDLGWHVASVFSDRVVPGPSLGLTFQSLTMNDTGEYFCTYHTYPGGIYKGRIFLKVQESSDDRNGLAQFQTAPLGGTMAAVLGLICLMVTGVTVLARKDKSIRMHSIESGLGRTEAEPQEWNLRSLSSPGSPVQTQTAPAGPCGEQAEDDYADPQEYFNVLSYRSLESFIAVSKTG.

The N-terminal stretch at 1–28 (MHGWLLLVWVQGLIQAAFLATAIGATAG) is a signal peptide. Positions 29–127 (TIDTKRNISA…GGIYKGRIFL (99 aa)) constitute an Ig-like V-type domain. At 29-148 (TIDTKRNISA…LAQFQTAPLG (120 aa)) the chain is on the extracellular side. The homodimerization stretch occupies residues 35-45 (NISAEEGGSVI). Residues Cys48 and Cys111 are joined by a disulfide bond. N-linked (GlcNAc...) asparagine glycosylation occurs at Asn104. The chain crosses the membrane as a helical span at residues 149-169 (GTMAAVLGLICLMVTGVTVLA). Residues 170 to 249 (RKDKSIRMHS…ESFIAVSKTG (80 aa)) lie on the Cytoplasmic side of the membrane. A disordered region spans residues 182–222 (SGLGRTEAEPQEWNLRSLSSPGSPVQTQTAPAGPCGEQAED). Residues 195–211 (NLRSLSSPGSPVQTQTA) show a composition bias toward polar residues. Positions 234–239 (LSYRSL) match the ITIM motif motif.

As to quaternary structure, homodimer in cis; binds with high affinity to PVR, forming a heterotetrameric assembly of two TIGIT and two PVR molecules. Binds with lower affinity to NECTIN2 and NECTIN3. Interacts with GRB2. Interacts with NECTIN4.

The protein localises to the cell membrane. In terms of biological role, inhibitory receptor that plays a role in the modulation of immune responses. Suppresses T-cell activation by promoting the generation of mature immunoregulatory dendritic cells. Upon binding to its ligands PVR/CD155 or NECTIN2/CD112, which are expressed on antigen-presenting cells, sends inhibitory signals to the T-cell or NK cell. Mechanistically, interaction with ligand leads to phosphorylation of the cytoplasmic tail by Src family tyrosine kinases such as FYN or LCK, allowing subsequent binding to adapter GRB2 and SHIP1/INPP5D. In turn, inhibits PI3K and MAPK signaling cascades. In addition, associates with beta-arrestin-2/ARRB2 to recruit SHIP1/INPP5D that suppresses autoubiquitination of TRAF6 and subsequently inhibits NF-kappa-B signaling pathway. Also acts as a receptor for NECTIN4 to inhibit NK cell cytotoxicity. The sequence is that of T-cell immunoreceptor with Ig and ITIM domains from Mus musculus (Mouse).